We begin with the raw amino-acid sequence, 76 residues long: ATP synthase subunit 9, mitochondrial (76 aa).

2 helical membrane-spanning segments follow: residues 14 to 34 (ISTI…AALI) and 52 to 72 (ILGF…SFLL).

It belongs to the ATPase C chain family. F-type ATPases have 2 components, CF(1) - the catalytic core - and CF(0) - the membrane proton channel. CF(1) has five subunits: alpha(3), beta(3), gamma(1), delta(1), epsilon(1). CF(0) has three main subunits: a, b and c.

The protein localises to the mitochondrion membrane. Its function is as follows. Mitochondrial membrane ATP synthase (F(1)F(0) ATP synthase or Complex V) produces ATP from ADP in the presence of a proton gradient across the membrane which is generated by electron transport complexes of the respiratory chain. F-type ATPases consist of two structural domains, F(1) - containing the extramembraneous catalytic core and F(0) - containing the membrane proton channel, linked together by a central stalk and a peripheral stalk. During catalysis, ATP synthesis in the catalytic domain of F(1) is coupled via a rotary mechanism of the central stalk subunits to proton translocation. Part of the complex F(0) domain. A homomeric c-ring of probably 10 subunits is part of the complex rotary element. This is ATP synthase subunit 9, mitochondrial (ATP9) from Vanderwaltozyma polyspora (strain ATCC 22028 / DSM 70294 / BCRC 21397 / CBS 2163 / NBRC 10782 / NRRL Y-8283 / UCD 57-17) (Kluyveromyces polysporus).